A 129-amino-acid polypeptide reads, in one-letter code: Protein Turandot B2 (129 aa).

The N-terminal stretch at 1–21 (MNSATSLMCFALLLISPLCMG) is a signal peptide.

This sequence belongs to the Turandot family.

The protein localises to the secreted. Its function is as follows. A humoral factor that may play a role in stress tolerance. The chain is Protein Turandot B2 (TotB2) from Drosophila erecta (Fruit fly).